The following is a 1014-amino-acid chain: Exportin-T (1014 aa).

The protein belongs to the exportin family.

Its subcellular location is the nucleus. The protein resides in the cytoplasm. In terms of biological role, tRNA nucleus export receptor which facilitates tRNA translocation across the nuclear pore complex. Involved in pre-tRNA splicing, probably by affecting the interaction of pre-tRNA with splicing endonuclease. This Podospora anserina (strain S / ATCC MYA-4624 / DSM 980 / FGSC 10383) (Pleurage anserina) protein is Exportin-T (LOS1).